A 217-amino-acid polypeptide reads, in one-letter code: Phosphoribosylformylglycinamidine synthase subunit PurQ (217 aa).

Positions 2-217 (SIGVLVFPGS…GRVLLQGLLS (216 aa)) constitute a Glutamine amidotransferase type-1 domain. Catalysis depends on Cys-86, which acts as the Nucleophile. Active-site residues include His-194 and Glu-196.

In terms of assembly, part of the FGAM synthase complex composed of 1 PurL, 1 PurQ and 2 PurS subunits.

It is found in the cytoplasm. The enzyme catalyses N(2)-formyl-N(1)-(5-phospho-beta-D-ribosyl)glycinamide + L-glutamine + ATP + H2O = 2-formamido-N(1)-(5-O-phospho-beta-D-ribosyl)acetamidine + L-glutamate + ADP + phosphate + H(+). It carries out the reaction L-glutamine + H2O = L-glutamate + NH4(+). It participates in purine metabolism; IMP biosynthesis via de novo pathway; 5-amino-1-(5-phospho-D-ribosyl)imidazole from N(2)-formyl-N(1)-(5-phospho-D-ribosyl)glycinamide: step 1/2. Part of the phosphoribosylformylglycinamidine synthase complex involved in the purines biosynthetic pathway. Catalyzes the ATP-dependent conversion of formylglycinamide ribonucleotide (FGAR) and glutamine to yield formylglycinamidine ribonucleotide (FGAM) and glutamate. The FGAM synthase complex is composed of three subunits. PurQ produces an ammonia molecule by converting glutamine to glutamate. PurL transfers the ammonia molecule to FGAR to form FGAM in an ATP-dependent manner. PurS interacts with PurQ and PurL and is thought to assist in the transfer of the ammonia molecule from PurQ to PurL. This chain is Phosphoribosylformylglycinamidine synthase subunit PurQ, found in Parasynechococcus marenigrum (strain WH8102).